Here is a 415-residue protein sequence, read N- to C-terminus: tRNA(Ile)-lysidine synthase (415 aa).

An ATP-binding site is contributed by Ser-36 to Ser-41.

Belongs to the tRNA(Ile)-lysidine synthase family.

Its subcellular location is the cytoplasm. It catalyses the reaction cytidine(34) in tRNA(Ile2) + L-lysine + ATP = lysidine(34) in tRNA(Ile2) + AMP + diphosphate + H(+). Functionally, ligates lysine onto the cytidine present at position 34 of the AUA codon-specific tRNA(Ile) that contains the anticodon CAU, in an ATP-dependent manner. Cytidine is converted to lysidine, thus changing the amino acid specificity of the tRNA from methionine to isoleucine. The polypeptide is tRNA(Ile)-lysidine synthase (Tropheryma whipplei (strain Twist) (Whipple's bacillus)).